A 374-amino-acid polypeptide reads, in one-letter code: Alanine racemase (374 aa).

Residue Lys35 is the Proton acceptor; specific for D-alanine of the active site. Lys35 carries the N6-(pyridoxal phosphate)lysine modification. Arg133 lines the substrate pocket. The active-site Proton acceptor; specific for L-alanine is Tyr261. Met315 contributes to the substrate binding site.

Belongs to the alanine racemase family. Pyridoxal 5'-phosphate serves as cofactor.

It catalyses the reaction L-alanine = D-alanine. It functions in the pathway amino-acid biosynthesis; D-alanine biosynthesis; D-alanine from L-alanine: step 1/1. Catalyzes the interconversion of L-alanine and D-alanine. May also act on other amino acids. This chain is Alanine racemase (alr), found in Psychrobacter sp. (strain PRwf-1).